The sequence spans 286 residues: Bifunctional protein FolD (286 aa).

NADP(+) contacts are provided by residues 165 to 167 (GRS) and Ser-190.

The protein belongs to the tetrahydrofolate dehydrogenase/cyclohydrolase family. In terms of assembly, homodimer.

It carries out the reaction (6R)-5,10-methylene-5,6,7,8-tetrahydrofolate + NADP(+) = (6R)-5,10-methenyltetrahydrofolate + NADPH. It catalyses the reaction (6R)-5,10-methenyltetrahydrofolate + H2O = (6R)-10-formyltetrahydrofolate + H(+). The protein operates within one-carbon metabolism; tetrahydrofolate interconversion. Functionally, catalyzes the oxidation of 5,10-methylenetetrahydrofolate to 5,10-methenyltetrahydrofolate and then the hydrolysis of 5,10-methenyltetrahydrofolate to 10-formyltetrahydrofolate. This chain is Bifunctional protein FolD, found in Staphylococcus aureus (strain JH9).